The primary structure comprises 246 residues: Putative 4'-phosphopantetheinyl transferase slr0495 (246 aa).

Mg(2+) contacts are provided by aspartate 110 and glutamate 156.

The protein belongs to the P-Pant transferase superfamily. Gsp/Sfp/HetI/AcpT family. Mg(2+) serves as cofactor.

Its function is as follows. Probably transfers the 4'-phosphopantetheine moiety from coenzyme A (CoA) to a serine residue of a carrier protein domain. This chain is Putative 4'-phosphopantetheinyl transferase slr0495, found in Synechocystis sp. (strain ATCC 27184 / PCC 6803 / Kazusa).